Reading from the N-terminus, the 305-residue chain is PI-PLC X domain-containing protein 2 (305 aa).

A PI-PLC X-box domain is found at 42–215; that stretch reads HLHNLPLSNL…NCQVLIFYHC (174 aa). Catalysis depends on residues histidine 57 and histidine 132.

Widely expressed.

The protein resides in the nucleus. The catalysed reaction is a 1,2-diacyl-sn-glycero-3-phospho-(1D-myo-inositol) + H2O = 1D-myo-inositol 1-phosphate + a 1,2-diacyl-sn-glycerol + H(+). Catalyzes the hydrolysis of inositol from phosphatidylinositol (1,2-diacyl-sn-glycero-3-phospho-(1D-myo-inositol), PI). Could also hydrolyze various multi-phosphorylated derivatives of PI, such as phosphatidylinositol-4,5 bisphosphate (PIP2), releasing inositol-1,4,5-trisphosphate (IP3) and the protein kinase C activator diacylglycerol (DAG), therefore mediating cell signaling. In Homo sapiens (Human), this protein is PI-PLC X domain-containing protein 2 (PLCXD2).